We begin with the raw amino-acid sequence, 433 residues long: MRYERVKGTVDIFGQDIPYWYFVEQRAIQVALLFGYKEIRTPVFEQTELFARSVGQETDIVQKEMYTFTDKGGRSITLRPEGTAPTIRAFLENSMINLGLPQRFYYLGPMFRYERPQAGRLRQFHQFGIELIGSADPAADVETIQLAKMFLDSLELKKYKIYINSIGCQECRRAYKEALRSYYEHHYDHICDDCKRRFETNIMRLLDCKVDINVAKQAPKISDYLCDHCRDHYESIKQMLTDLRVYFHEDSSLVRGLDYYTRTVFEIKHESLGAQSTILAGGRYDGLCKELGGHDIPSLGFASGIERLILAVKAEEIEIPKPPYCDVYIASIGKQARVKAFQIAQGLRLCKIPVISDVNSRSLKAQLKHADKLGAILAIIIGENELAQSTVQVKNLLTETQSEVEFDYVVDYVLDLLKVEGRKGRGFREGNNT.

Belongs to the class-II aminoacyl-tRNA synthetase family. As to quaternary structure, homodimer.

It is found in the cytoplasm. It carries out the reaction tRNA(His) + L-histidine + ATP = L-histidyl-tRNA(His) + AMP + diphosphate + H(+). This Pseudothermotoga lettingae (strain ATCC BAA-301 / DSM 14385 / NBRC 107922 / TMO) (Thermotoga lettingae) protein is Histidine--tRNA ligase.